The primary structure comprises 302 residues: Sulfate adenylyltransferase subunit 2 (302 aa).

A disordered region spans residues 279 to 302 (ERQGRAIDHDQSGSMELKKRQGYF). Residues 280 to 302 (RQGRAIDHDQSGSMELKKRQGYF) show a composition bias toward basic and acidic residues.

The protein belongs to the PAPS reductase family. CysD subfamily. Heterodimer composed of CysD, the smaller subunit, and CysN.

It catalyses the reaction sulfate + ATP + H(+) = adenosine 5'-phosphosulfate + diphosphate. The protein operates within sulfur metabolism; hydrogen sulfide biosynthesis; sulfite from sulfate: step 1/3. In terms of biological role, with CysN forms the ATP sulfurylase (ATPS) that catalyzes the adenylation of sulfate producing adenosine 5'-phosphosulfate (APS) and diphosphate, the first enzymatic step in sulfur assimilation pathway. APS synthesis involves the formation of a high-energy phosphoric-sulfuric acid anhydride bond driven by GTP hydrolysis by CysN coupled to ATP hydrolysis by CysD. In Photobacterium profundum (strain SS9), this protein is Sulfate adenylyltransferase subunit 2.